The following is a 428-amino-acid chain: Serine--tRNA ligase (428 aa).

235–237 (TAE) contacts L-serine. An ATP-binding site is contributed by 266 to 268 (RSE). Position 289 (Glu-289) interacts with L-serine. 353-356 (EISS) contacts ATP. Position 389 (Ser-389) interacts with L-serine.

The protein belongs to the class-II aminoacyl-tRNA synthetase family. Type-1 seryl-tRNA synthetase subfamily. Homodimer. The tRNA molecule binds across the dimer.

The protein resides in the cytoplasm. The enzyme catalyses tRNA(Ser) + L-serine + ATP = L-seryl-tRNA(Ser) + AMP + diphosphate + H(+). It carries out the reaction tRNA(Sec) + L-serine + ATP = L-seryl-tRNA(Sec) + AMP + diphosphate + H(+). Its pathway is aminoacyl-tRNA biosynthesis; selenocysteinyl-tRNA(Sec) biosynthesis; L-seryl-tRNA(Sec) from L-serine and tRNA(Sec): step 1/1. In terms of biological role, catalyzes the attachment of serine to tRNA(Ser). Is also able to aminoacylate tRNA(Sec) with serine, to form the misacylated tRNA L-seryl-tRNA(Sec), which will be further converted into selenocysteinyl-tRNA(Sec). The protein is Serine--tRNA ligase of Shewanella halifaxensis (strain HAW-EB4).